The following is a 548-amino-acid chain: Probable malate:quinone oxidoreductase (548 aa).

The segment at 520–548 (YDRPQAADSTPKPQLKPQPVQKEVADIAL) is disordered. The span at 530–541 (PKPQLKPQPVQK) shows a compositional bias: low complexity.

Belongs to the MQO family. FAD is required as a cofactor.

The catalysed reaction is (S)-malate + a quinone = a quinol + oxaloacetate. It participates in carbohydrate metabolism; tricarboxylic acid cycle; oxaloacetate from (S)-malate (quinone route): step 1/1. The chain is Probable malate:quinone oxidoreductase from Shigella dysenteriae serotype 1 (strain Sd197).